Here is a 2364-residue protein sequence, read N- to C-terminus: Cytotoxin-L (2364 aa).

The tract at residues M1–L91 is four-helical bundle. The GT44 domain maps to K96 to L468. The tract at residues K96 to L468 is glucosyltransferase region. Residues I101–I103, N139, L265–D270, and D286–D288 contribute to the UDP-alpha-D-glucose site. D288, E515, and S518 together coordinate Mg(2+). S518 to W520 contacts UDP-alpha-D-glucose. Positions G544 to T799 are autoprocessing region. Zn(2+) contacts are provided by E545 and D546. Residues L567–S774 enclose the Peptidase C80 domain. 3 residues coordinate 1D-myo-inositol hexakisphosphate: Y577, K600, and K647. H653 serves as a coordination point for Zn(2+). H653 (for protease activity) is an active-site residue. Catalysis depends on C698, which acts as the Nucleophile; for protease activity. H757 contacts Zn(2+). 1D-myo-inositol hexakisphosphate-binding residues include K764, K775, and K792. The segment at L800–P1500 is translocation region. Interaction with host SEMA6A and SEMA6B stretches follow at residues C1433–E1438, D1466–Y1471, F1484–R1495, N1504–K1511, and Y1596–P1601. Cell wall-binding repeat units lie at residues E1813 to M1832, V1833 to N1852, I1854 to G1873, S1876 to L1895, F1926 to A1945, A1946 to E1965, L1967 to M1986, Q1987 to M2006, Q2007 to R2026, Y2057 to A2076, V2077 to E2097, C2099 to R2118, Q2119 to I2138, E2139 to V2158, E2209 to P2224, K2227 to M2249, R2250 to M2269, Q2270 to M2289, Y2320 to A2339, and A2340 to E2359. A receptor-binding (CROPS) region region spans residues G1835 to E2364.

Belongs to the clostridial glucosylating toxin (LCGT) family. Homomultimer; forms an inactive homomultimer at pH 8, which dissociates at pH 4, leading to cytotoxicity. Interacts with host SEMA6A; interaction promotes toxin entry into host cell. Interacts with host SEMA6B; interaction promotes toxin entry into host cell. Zn(2+) serves as cofactor. The cofactor is Mn(2+). It depends on Mg(2+) as a cofactor. In terms of processing, undergoes autocatalytic cleavage to release the N-terminal part (Glucosyltransferase TcsL), which constitutes the active part of the toxin, in the host cytosol. 1D-myo-inositol hexakisphosphate-binding (InsP6) activates the peptidase C80 domain and promotes autoprocessing.

The protein localises to the secreted. Its subcellular location is the host endosome membrane. The protein resides in the host cytoplasm. It is found in the host cytosol. It localises to the host cell membrane. It carries out the reaction L-threonyl-[protein] + UDP-alpha-D-glucose = 3-O-(alpha-D-glucosyl)-L-threonyl-[protein] + UDP + H(+). Protease activity is activated upon binding to 1D-myo-inositol hexakisphosphate (InsP6), which induces conformational reorganization. Its function is as follows. Precursor of a cytotoxin that targets the vascular endothelium, inducing an anti-inflammatory effect and resulting in lethal toxic shock syndrome. TcsL constitutes the main toxin that mediates the pathology of P.sordellii infection, an anaerobic Gram-positive bacterium found in soil and in the gastrointestinal and vaginal tracts of animals and humans; although the majority of carriers are asymptomatic, pathogenic P.sordellii infections arise rapidly and are highly lethal. This form constitutes the precursor of the toxin: it enters into host cells and mediates autoprocessing to release the active toxin (Glucosyltransferase TcsL) into the host cytosol. Targets vascular endothelium by binding to the semaphorin proteins SEMA6A and SEMA6B, and enters host cells via clathrin-mediated endocytosis. Once entered into host cells, acidification in the endosome promotes the membrane insertion of the translocation region and formation of a pore, leading to translocation of the GT44 and peptidase C80 domains across the endosomal membrane. This activates the peptidase C80 domain and autocatalytic processing, releasing the N-terminal part (Glucosyltransferase TcsL), which constitutes the active part of the toxin, in the cytosol. Active form of the toxin, which is released into the host cytosol following autoprocessing and inactivates small GTPases. Acts by mediating monoglucosylation of small GTPases of the Ras (H-Ras/HRAS, K-Ras/KRAS and N-Ras/NRAS) family in host cells at the conserved threonine residue located in the switch I region ('Thr-37/35'), using UDP-alpha-D-glucose as the sugar donor. Also able to catalyze monoglucosylation of some members of the Rho family (Rac1 and Rap2A), but with less efficiency than with Ras proteins. Monoglucosylation of host small GTPases completely prevents the recognition of the downstream effector, blocking the GTPases in their inactive form and leading to apoptosis. Induces an anti-inflammatory effect, mainly by inactivating Ras proteins which results in blockage of the cell cycle and killing of immune cells. The absence or moderate local inflammatory response allows C.sordellii spreading in deep tissues, production of toxin which is released in the general circulation and causes a toxic shock syndrome. In Paraclostridium sordellii (strain ATCC 9714 / DSM 2141 / JCM 3814 / LMG 15708 / NCIMB 10717 / 211) (Clostridium sordellii), this protein is Cytotoxin-L.